The following is a 177-amino-acid chain: Large ribosomal subunit protein uL6 (177 aa).

It belongs to the universal ribosomal protein uL6 family. As to quaternary structure, part of the 50S ribosomal subunit.

This protein binds to the 23S rRNA, and is important in its secondary structure. It is located near the subunit interface in the base of the L7/L12 stalk, and near the tRNA binding site of the peptidyltransferase center. The sequence is that of Large ribosomal subunit protein uL6 from Latilactobacillus sakei subsp. sakei (strain 23K) (Lactobacillus sakei subsp. sakei).